A 356-amino-acid chain; its full sequence is DNA-directed RNA polymerase subunit alpha (356 aa).

An alpha N-terminal domain (alpha-NTD) region spans residues 1–230 (MNLHRISSEP…DLLKPLLKVE (230 aa)). Residues 267 to 356 (IDQPLLPADS…IRKSYGHILG (90 aa)) form an alpha C-terminal domain (alpha-CTD) region.

The protein belongs to the RNA polymerase alpha chain family. In plastids the minimal PEP RNA polymerase catalytic core is composed of four subunits: alpha, beta, beta', and beta''. When a (nuclear-encoded) sigma factor is associated with the core the holoenzyme is formed, which can initiate transcription.

It localises to the plastid. The protein resides in the chloroplast. It catalyses the reaction RNA(n) + a ribonucleoside 5'-triphosphate = RNA(n+1) + diphosphate. In terms of biological role, DNA-dependent RNA polymerase catalyzes the transcription of DNA into RNA using the four ribonucleoside triphosphates as substrates. The sequence is that of DNA-directed RNA polymerase subunit alpha from Zygnema circumcarinatum (Green alga).